The chain runs to 242 residues: tRNA pseudouridine synthase A (242 aa).

D51 serves as the catalytic Nucleophile. Y107 serves as a coordination point for substrate.

This sequence belongs to the tRNA pseudouridine synthase TruA family. In terms of assembly, homodimer.

The catalysed reaction is uridine(38/39/40) in tRNA = pseudouridine(38/39/40) in tRNA. Formation of pseudouridine at positions 38, 39 and 40 in the anticodon stem and loop of transfer RNAs. This is tRNA pseudouridine synthase A from Helicobacter pylori (strain J99 / ATCC 700824) (Campylobacter pylori J99).